The sequence spans 711 residues: Long-chain-fatty-acid--CoA ligase 4 (711 aa).

Residues 8-28 form a helical; Signal-anchor for type III membrane protein membrane-spanning segment; sequence LTIVLLPVHLLITIYSALIFI. At 29 to 711 the chain is on the cytoplasmic side; sequence PWYFLTNAKK…KDIERMYGGK (683 aa). S447 is modified (phosphoserine).

Belongs to the ATP-dependent AMP-binding enzyme family. Mg(2+) is required as a cofactor.

Its subcellular location is the mitochondrion outer membrane. It is found in the peroxisome membrane. The protein resides in the microsome membrane. The protein localises to the endoplasmic reticulum membrane. It localises to the cell membrane. The catalysed reaction is a long-chain fatty acid + ATP + CoA = a long-chain fatty acyl-CoA + AMP + diphosphate. It carries out the reaction (5Z,8Z,11Z,14Z)-eicosatetraenoate + ATP + CoA = (5Z,8Z,11Z,14Z)-eicosatetraenoyl-CoA + AMP + diphosphate. The enzyme catalyses 15-hydroxy-(5Z,8Z,11Z,13E)-eicosatetraenoate + ATP + CoA = 15-hydroxy-(5Z,8Z,11Z,13E)-eicosatetraenoyl-CoA + AMP + diphosphate. It catalyses the reaction 12-hydroxy-(5Z,8Z,10E,14Z)-eicosatetraenoate + ATP + CoA = 12-hydroxy-(5Z,8Z,10E,14Z)-eicosatetraenoyl-CoA + AMP + diphosphate. The catalysed reaction is 5-hydroxy-(6E,8Z,11Z,14Z)-eicosatetraenoate + ATP + CoA = 5-hydroxy-(6E,8Z,11Z,14Z)-eicosatetraenoyl-CoA + AMP + diphosphate. It carries out the reaction 5,6-epoxy-(8Z,11Z,14Z)-eicosatrienoate + ATP + CoA = 5,6-epoxy-(8Z,11Z,14Z)-eicosatrienoyl-CoA + AMP + diphosphate. The enzyme catalyses 14,15-epoxy-(5Z,8Z,11Z)-eicosatrienoate + ATP + CoA = 14,15-epoxy-(5Z,8Z,11Z)-eicosatrienoyl-CoA + AMP + diphosphate. It catalyses the reaction 11,12-epoxy-(5Z,8Z,14Z)-eicosatrienoate + ATP + CoA = 11,12-epoxy-(5Z,8Z,14Z)-eicosatrienoyl-CoA + AMP + diphosphate. The catalysed reaction is 8,9-epoxy-(5Z,11Z,14Z)-eicosatrienoate + ATP + CoA = 8,9-epoxy-(5Z,11Z,14Z)-eicosatrienoyl-CoA + AMP + diphosphate. It carries out the reaction hexadecanoate + ATP + CoA = hexadecanoyl-CoA + AMP + diphosphate. The enzyme catalyses (E)-hexadec-2-enoate + ATP + CoA = (2E)-hexadecenoyl-CoA + AMP + diphosphate. With respect to regulation, both triacsin C and rosiglitazone inhibit arachidonoyl-CoA ligase activity. In terms of biological role, catalyzes the conversion of long-chain fatty acids to their active form acyl-CoA for both synthesis of cellular lipids, and degradation via beta-oxidation. Preferentially activates arachidonate and eicosapentaenoate as substrates. Preferentially activates 8,9-EET &gt; 14,15-EET &gt; 5,6-EET &gt; 11,12-EET. Modulates glucose-stimulated insulin secretion by regulating the levels of unesterified EETs. Modulates prostaglandin E2 secretion. This chain is Long-chain-fatty-acid--CoA ligase 4 (Acsl4), found in Rattus norvegicus (Rat).